The primary structure comprises 137 residues: Protein phosphatase 1 regulatory subunit 1B (137 aa).

The tract at residues 1–137 is disordered; that stretch reads DPKDRKKIQF…EEEEEEEDSQ (137 aa). A Phosphothreonine; by PKA modification is found at Thr-33. The segment covering 40 to 62 has biased composition (basic and acidic residues); that stretch reads LXEHSSPEEEASPHQRAAGEGHH. Phosphoserine is present on residues Ser-44 and Ser-45. Thr-74 is subject to Phosphothreonine; by CDK5. Residues 88 to 99 are compositionally biased toward polar residues; sequence HLQSISNLGENQ. Ser-101 bears the Phosphoserine mark. Basic and acidic residues predominate over residues 108-117; that stretch reads GELRELGYPR. A compositionally biased stretch (acidic residues) spans 118–137; it reads EEEEEEEEDDEEEEEEEDSQ. Ser-136 is subject to Phosphoserine.

It belongs to the protein phosphatase inhibitor 1 family. Phosphorylation of Thr-33 is required for activity. In terms of processing, dopamine- and cyclic AMP-regulated neuronal phosphoprotein.

It localises to the cytoplasm. In terms of biological role, inhibitor of protein-phosphatase 1. This chain is Protein phosphatase 1 regulatory subunit 1B (PPP1R1B), found in Sus scrofa (Pig).